A 255-amino-acid chain; its full sequence is NAD kinase (255 aa).

Asp44 (proton acceptor) is an active-site residue. NAD(+)-binding positions include 44 to 45 (DG), His49, 114 to 115 (NE), Asp144, Ala152, 155 to 160 (SAYNLS), and Gln216.

This sequence belongs to the NAD kinase family. A divalent metal cation serves as cofactor.

Its subcellular location is the cytoplasm. It catalyses the reaction NAD(+) + ATP = ADP + NADP(+) + H(+). In terms of biological role, involved in the regulation of the intracellular balance of NAD and NADP, and is a key enzyme in the biosynthesis of NADP. Catalyzes specifically the phosphorylation on 2'-hydroxyl of the adenosine moiety of NAD to yield NADP. This chain is NAD kinase, found in Rickettsia felis (strain ATCC VR-1525 / URRWXCal2) (Rickettsia azadi).